The following is a 285-amino-acid chain: MEMO1 family protein Igni_0992 (285 aa).

It belongs to the MEMO1 family.

This chain is MEMO1 family protein Igni_0992, found in Ignicoccus hospitalis (strain KIN4/I / DSM 18386 / JCM 14125).